The sequence spans 533 residues: Thromboxane-A synthase (533 aa).

The Cytoplasmic segment spans residues 1–10 (MEVLGLLKFE). Residues 11–31 (VSGTVVTVTLSVVLLALLKWY) form a helical membrane-spanning segment. Residues 32 to 75 (STSAFSRLRKLGIRHPEPSPFVGNLMFFRQGFWESHLELRERYG) are Lumenal-facing. A helical transmembrane segment spans residues 76–96 (PLCGYYLGRRMYIVISDPDMI). Residues 97 to 223 (KEVLVENFSN…QRVFAFSTPR (127 aa)) are Cytoplasmic-facing. Residues 224-244 (PLLALILSFPSIMVPLARILP) form a helical membrane-spanning segment. At 245-335 (NKNRDELNGF…LTVDEIAGQA (91 aa)) the chain is on the lumenal side. A helical transmembrane segment spans residues 336-356 (FLFLIAGHEITTNTLSFITYL). The Cytoplasmic segment spans residues 357–533 (LATHPECQER…NGVYVKIVSR (177 aa)). Position 479 (Cys-479) interacts with heme.

This sequence belongs to the cytochrome P450 family. As to quaternary structure, monomer. Heme serves as cofactor. As to expression, expressed in bone marrow, spleen, lung, thymus, liver, uterus, and macrophages.

It localises to the endoplasmic reticulum membrane. The enzyme catalyses prostaglandin H2 = thromboxane A2. It carries out the reaction prostaglandin H2 = (12S)-hydroxy-(5Z,8E,10E)-heptadecatrienoate + malonaldehyde. The catalysed reaction is a hydroperoxyeicosatetraenoate = an oxoeicosatetraenoate + H2O. It catalyses the reaction (15S)-hydroperoxy-(5Z,8Z,11Z,13E)-eicosatetraenoate = 15-oxo-(5Z,8Z,11Z,13E)-eicosatetraenoate + H2O. The enzyme catalyses (15S)-hydroperoxy-(5Z,8Z,11Z,13E)-eicosatetraenoate + AH2 = (15S)-hydroxy-(5Z,8Z,11Z,13E)-eicosatetraenoate + A + H2O. Functionally, catalyzes the conversion of prostaglandin H2 (PGH2) to thromboxane A2 (TXA2), a potent inducer of blood vessel constriction and platelet aggregation. Also cleaves PGH2 to 12-hydroxy-heptadecatrienoicacid (12-HHT) and malondialdehyde, which is known to act as a mediator of DNA damage. 12-HHT and malondialdehyde are formed stoichiometrically in the same amounts as TXA2. Additionally, displays dehydratase activity, toward (15S)-hydroperoxy-(5Z,8Z,11Z,13E)-eicosatetraenoate (15(S)-HPETE) producing 15-KETE and 15-HETE. This is Thromboxane-A synthase (Tbxas1) from Rattus norvegicus (Rat).